The chain runs to 267 residues: Lyso-ornithine lipid O-acyltransferase (267 aa).

Residues 7 to 27 form a helical membrane-spanning segment; sequence IFLVVAAMVALSLSLIPFQYL.

Belongs to the 1-acyl-sn-glycerol-3-phosphate acyltransferase family. OlsA subfamily.

The protein resides in the membrane. It catalyses the reaction a lyso-ornithine lipid + a fatty acyl-[ACP] = an N(2)-[(3R)-3-(acyloxy)acyl]-L-ornithine lipid + holo-[ACP]. The protein operates within lipid metabolism. Its function is as follows. Catalyzes the second step in the formation of ornithine lipids, which are phosphorus-free membrane lipids. Uses acyl-acyl carrier protein (acyl-AcpP) as an acyl donor and converts lyso-ornithine lipid (LOL) into ornithine lipid (OL). The chain is Lyso-ornithine lipid O-acyltransferase from Brucella abortus (strain 2308).